The following is a 214-amino-acid chain: Heat shock protein 30 (214 aa).

Residues 66 to 183 (VPSSLTIQPV…AERVVPINCS (118 aa)) enclose the sHSP domain. The disordered stretch occupies residues 193-214 (SKTEGSITDTQKKQENTISKED). Residues 202–214 (TQKKQENTISKED) show a composition bias toward basic and acidic residues.

The protein belongs to the small heat shock protein (HSP20) family.

The sequence is that of Heat shock protein 30 (hsp30) from Oncorhynchus tshawytscha (Chinook salmon).